The chain runs to 308 residues: Acetyl-coenzyme A carboxylase carboxyl transferase subunit beta 1 (308 aa).

Residues 25–294 (VWTKCTSCEQ…PLVVSVNESP (270 aa)) enclose the CoA carboxyltransferase N-terminal domain. Zn(2+) contacts are provided by Cys-29, Cys-32, Cys-48, and Cys-51. The C4-type zinc finger occupies 29–51 (CTSCEQVLYHAELERNLEVCPKC). Residues 288 to 308 (VSVNESPNEEPYSVPEVDEKG) form a disordered region.

Belongs to the AccD/PCCB family. In terms of assembly, acetyl-CoA carboxylase is a heterohexamer composed of biotin carboxyl carrier protein (AccB), biotin carboxylase (AccC) and two subunits each of ACCase subunit alpha (AccA) and ACCase subunit beta (AccD). Requires Zn(2+) as cofactor.

The protein localises to the cytoplasm. The catalysed reaction is N(6)-carboxybiotinyl-L-lysyl-[protein] + acetyl-CoA = N(6)-biotinyl-L-lysyl-[protein] + malonyl-CoA. It participates in lipid metabolism; malonyl-CoA biosynthesis; malonyl-CoA from acetyl-CoA: step 1/1. Functionally, component of the acetyl coenzyme A carboxylase (ACC) complex. Biotin carboxylase (BC) catalyzes the carboxylation of biotin on its carrier protein (BCCP) and then the CO(2) group is transferred by the transcarboxylase to acetyl-CoA to form malonyl-CoA. The protein is Acetyl-coenzyme A carboxylase carboxyl transferase subunit beta 1 of Vibrio parahaemolyticus serotype O3:K6 (strain RIMD 2210633).